The following is a 219-amino-acid chain: 7-carboxy-7-deazaguanine synthase (219 aa).

Residues 22–24 (IQG) and R37 each bind substrate. The Radical SAM core domain occupies 28-219 (LVGLPSVFIR…PQVHKCFDLK (192 aa)). [4Fe-4S] cluster-binding residues include C41, C45, and C48. T81 contacts substrate. S-adenosyl-L-methionine is bound by residues G83 and 130–132 (SPK).

The protein belongs to the radical SAM superfamily. 7-carboxy-7-deazaguanine synthase family. Homodimer. It depends on [4Fe-4S] cluster as a cofactor. S-adenosyl-L-methionine is required as a cofactor. The cofactor is Mg(2+).

It carries out the reaction 6-carboxy-5,6,7,8-tetrahydropterin + H(+) = 7-carboxy-7-deazaguanine + NH4(+). It functions in the pathway purine metabolism; 7-cyano-7-deazaguanine biosynthesis. Functionally, catalyzes the complex heterocyclic radical-mediated conversion of 6-carboxy-5,6,7,8-tetrahydropterin (CPH4) to 7-carboxy-7-deazaguanine (CDG), a step common to the biosynthetic pathways of all 7-deazapurine-containing compounds. This is 7-carboxy-7-deazaguanine synthase from Aquifex aeolicus (strain VF5).